Reading from the N-terminus, the 121-residue chain is Flagellar protein FliT (121 aa).

Residues 1–50 form a required for homodimerization region; the sequence is MNNAPHLYFAWQQLVEKSQLMLRLATEEQWDELIASEMAYVNAVQEIAHL. The segment at 60–98 is fliD binding; it reads MQEQLRPMLHLILDNESKVKQLLQIRMDELAKLVGQSSV.

Belongs to the FliT family. Homodimer. Interacts with FliD and FlhC.

It is found in the cytoplasm. The protein localises to the cytosol. Its function is as follows. Dual-function protein that regulates the transcription of class 2 flagellar operons and that also acts as an export chaperone for the filament-capping protein FliD. As a transcriptional regulator, acts as an anti-FlhDC factor; it directly binds FlhC, thus inhibiting the binding of the FlhC/FlhD complex to class 2 promoters, resulting in decreased expression of class 2 flagellar operons. As a chaperone, effects FliD transition to the membrane by preventing its premature polymerization, and by directing it to the export apparatus. The protein is Flagellar protein FliT of Escherichia coli O17:K52:H18 (strain UMN026 / ExPEC).